The sequence spans 333 residues: Protoheme IX farnesyltransferase (333 aa).

8 consecutive transmembrane segments (helical) span residues 31–51 (VMSL…APIH), 52–72 (PVLA…SGAL), 115–135 (MFLG…TIVF), 152–172 (IVIG…AATG), 178–198 (AWLM…ALSL), 223–243 (KQIL…VLTG), 244–264 (LGGP…LLLA), and 303–323 (LFAF…GEAV).

Belongs to the UbiA prenyltransferase family. Protoheme IX farnesyltransferase subfamily.

The protein localises to the cell inner membrane. It carries out the reaction heme b + (2E,6E)-farnesyl diphosphate + H2O = Fe(II)-heme o + diphosphate. It participates in porphyrin-containing compound metabolism; heme O biosynthesis; heme O from protoheme: step 1/1. In terms of biological role, converts heme B (protoheme IX) to heme O by substitution of the vinyl group on carbon 2 of heme B porphyrin ring with a hydroxyethyl farnesyl side group. The chain is Protoheme IX farnesyltransferase from Caulobacter vibrioides (strain ATCC 19089 / CIP 103742 / CB 15) (Caulobacter crescentus).